The chain runs to 468 residues: MSPKTLYDKIWDAHLAHEAEDGTCLLYIDRHLVHEVTSPQAFEGLRMAGRKVRAPEKTIAVPDHNVPTTEGREDPAQMTEESRIQVQALDKNAREFGVHYYPVDDIRQGIVHIVGPEQGWTLPGMTVVCGDSHTATHGAFGALAHGIGTSEVEHVLATQTLIQKKSKNMKVEITGKLNPGVTAKDITLAVIGATGTAGGTGYVIEYCGEAIRDLSMEGRMTVCNMAIEGGARAGLIAPDQTTFDYVKGRPHAPKGAQWEAALAWWKTLYSDDGAHFDKIVTLKGEEIEPVVTWGTSPEDVLPITGVVPSPEDFTGGKVEAARRSIEYMGLTPGQKLTDIEIDTVFIGSCTNGRIEDLRAVAEVVKGKKIKSGLRAMVVPGSGLVRAQAEEEGIADILKDAGFEWRLAGCSMCLAMNPDQLAPGERCAATSNRNFEGRQGYKGRTHLVSPAMAAAAALTGKLTDVRELI.

Residues C349, C409, and C412 each contribute to the [4Fe-4S] cluster site.

The protein belongs to the aconitase/IPM isomerase family. LeuC type 1 subfamily. Heterodimer of LeuC and LeuD. [4Fe-4S] cluster serves as cofactor.

The enzyme catalyses (2R,3S)-3-isopropylmalate = (2S)-2-isopropylmalate. The protein operates within amino-acid biosynthesis; L-leucine biosynthesis; L-leucine from 3-methyl-2-oxobutanoate: step 2/4. Functionally, catalyzes the isomerization between 2-isopropylmalate and 3-isopropylmalate, via the formation of 2-isopropylmaleate. The sequence is that of 3-isopropylmalate dehydratase large subunit from Ruegeria pomeroyi (strain ATCC 700808 / DSM 15171 / DSS-3) (Silicibacter pomeroyi).